A 156-amino-acid chain; its full sequence is FAD synthase (156 aa).

Residues 16-17, 21-24, Asp-101, and Tyr-129 each bind ATP; these read TF and HPGH.

Belongs to the archaeal FAD synthase family. Homodimer. A divalent metal cation is required as a cofactor.

The catalysed reaction is FMN + ATP + H(+) = FAD + diphosphate. Its pathway is cofactor biosynthesis; FAD biosynthesis; FAD from FMN: step 1/1. Catalyzes the transfer of the AMP portion of ATP to flavin mononucleotide (FMN) to produce flavin adenine dinucleotide (FAD) coenzyme. The chain is FAD synthase from Methanococcus aeolicus (strain ATCC BAA-1280 / DSM 17508 / OCM 812 / Nankai-3).